A 626-amino-acid polypeptide reads, in one-letter code: (R)-linalool synthase 2, chloroplastic (626 aa).

Residues Met-1 to Ser-21 constitute a chloroplast transit peptide. Residues Asp-377, Asp-381, and Glu-529 each coordinate Mg(2+). Positions Asp-377–Asp-381 match the DDXXD motif motif.

The protein belongs to the terpene synthase family. Tpsd subfamily. Mg(2+) serves as cofactor. The cofactor is Mn(2+).

It is found in the plastid. The protein resides in the chloroplast. It catalyses the reaction (2E)-geranyl diphosphate + H2O = (R)-linalool + diphosphate. The protein operates within terpene metabolism; oleoresin biosynthesis. Terpene synthase (mono-TPS) involved in the biosynthesis of monoterpene natural products included in conifer oleoresin secretions and volatile emissions; these compounds contribute to biotic and abiotic stress defense against herbivores and pathogens. Catalyzes the conversion of (2E)-geranyl diphosphate (GPP) to (R)-linalool. The sequence is that of (R)-linalool synthase 2, chloroplastic from Picea sitchensis (Sitka spruce).